The primary structure comprises 344 residues: Dihydroorotase (344 aa).

H14 and H16 together coordinate Zn(2+). Substrate contacts are provided by residues 16–18 and N42; that span reads HLR. Zn(2+)-binding residues include K100, H137, and H175. K100 carries the post-translational modification N6-carboxylysine. H137 contacts substrate. Residue L220 coordinates substrate. D248 serves as a coordination point for Zn(2+). The active site involves D248. Positions 252 and 264 each coordinate substrate.

It belongs to the metallo-dependent hydrolases superfamily. DHOase family. Class II DHOase subfamily. As to quaternary structure, homodimer. Requires Zn(2+) as cofactor.

The catalysed reaction is (S)-dihydroorotate + H2O = N-carbamoyl-L-aspartate + H(+). It functions in the pathway pyrimidine metabolism; UMP biosynthesis via de novo pathway; (S)-dihydroorotate from bicarbonate: step 3/3. Its function is as follows. Catalyzes the reversible cyclization of carbamoyl aspartate to dihydroorotate. This is Dihydroorotase from Cupriavidus metallidurans (strain ATCC 43123 / DSM 2839 / NBRC 102507 / CH34) (Ralstonia metallidurans).